The chain runs to 197 residues: Protein GrpE (197 aa).

Positions 1–40 (MSSKEQKTPEGQAPEEIIMDQHEEIEAVEPEASAEQVDPR) are disordered.

Belongs to the GrpE family. Homodimer.

The protein localises to the cytoplasm. Participates actively in the response to hyperosmotic and heat shock by preventing the aggregation of stress-denatured proteins, in association with DnaK and GrpE. It is the nucleotide exchange factor for DnaK and may function as a thermosensor. Unfolded proteins bind initially to DnaJ; upon interaction with the DnaJ-bound protein, DnaK hydrolyzes its bound ATP, resulting in the formation of a stable complex. GrpE releases ADP from DnaK; ATP binding to DnaK triggers the release of the substrate protein, thus completing the reaction cycle. Several rounds of ATP-dependent interactions between DnaJ, DnaK and GrpE are required for fully efficient folding. The sequence is that of Protein GrpE from Escherichia coli (strain K12 / DH10B).